We begin with the raw amino-acid sequence, 541 residues long: Propionyl-CoA carboxylase beta chain, mitochondrial (541 aa).

A mitochondrion-targeting transit peptide spans 1 to 28 (MAAAIRIRAVAAGARLSVLNCGLGITTR). One can recognise a CoA carboxyltransferase N-terminal domain in the interval 34 to 292 (PVSVKERIDN…SSQDPAPIRE (259 aa)). Residues 34-535 (PVSVKERIDN…SKKVHRPWRK (502 aa)) are carboxyltransferase. Residue S73 is modified to Phosphoserine. Residue K101 is modified to N6-acetyllysine; alternate. K101 carries the N6-succinyllysine; alternate modification. K250 bears the N6-succinyllysine mark. Residues 296-535 (PSDRLVPELD…SKKVHRPWRK (240 aa)) form the CoA carboxyltransferase C-terminal domain. An acyl-CoA binding region spans residues 327 to 360 (DEREFFEIMPSYAKNIVVGFARMNGRTVGIVGNQ). K476 and K491 each carry N6-acetyllysine; alternate. An N6-succinyllysine; alternate mark is found at K476 and K491.

This sequence belongs to the AccD/PCCB family. As to quaternary structure, the holoenzyme is a dodecamer composed of 6 PCCA/alpha subunits and 6 PCCB/beta subunits. In terms of tissue distribution, broadly expressed. Most abundantly expressed in the kidney, liver, small intestine and stomach.

It is found in the mitochondrion matrix. It carries out the reaction propanoyl-CoA + hydrogencarbonate + ATP = (S)-methylmalonyl-CoA + ADP + phosphate + H(+). The catalysed reaction is butanoyl-CoA + hydrogencarbonate + ATP = (2S)-ethylmalonyl-CoA + ADP + phosphate + H(+). The protein operates within metabolic intermediate metabolism; propanoyl-CoA degradation; succinyl-CoA from propanoyl-CoA: step 1/3. Its function is as follows. This is one of the 2 subunits of the biotin-dependent propionyl-CoA carboxylase (PCC), a mitochondrial enzyme involved in the catabolism of odd chain fatty acids, branched-chain amino acids isoleucine, threonine, methionine, and valine and other metabolites. Propionyl-CoA carboxylase catalyzes the carboxylation of propionyl-CoA/propanoyl-CoA to D-methylmalonyl-CoA/(S)-methylmalonyl-CoA. Within the holoenzyme, the alpha subunit catalyzes the ATP-dependent carboxylation of the biotin carried by the biotin carboxyl carrier (BCC) domain, while the beta subunit then transfers the carboxyl group from carboxylated biotin to propionyl-CoA. Propionyl-CoA carboxylase also significantly acts on butyryl-CoA/butanoyl-CoA, which is converted to ethylmalonyl-CoA/(2S)-ethylmalonyl-CoA. Other alternative minor substrates include (2E)-butenoyl-CoA/crotonoyl-CoA. This is Propionyl-CoA carboxylase beta chain, mitochondrial from Mus musculus (Mouse).